Reading from the N-terminus, the 180-residue chain is Large ribosomal subunit protein uL6 (180 aa).

This sequence belongs to the universal ribosomal protein uL6 family. In terms of assembly, part of the 50S ribosomal subunit.

Its function is as follows. This protein binds to the 23S rRNA, and is important in its secondary structure. It is located near the subunit interface in the base of the L7/L12 stalk, and near the tRNA binding site of the peptidyltransferase center. The protein is Large ribosomal subunit protein uL6 of Picosynechococcus sp. (strain ATCC 27264 / PCC 7002 / PR-6) (Agmenellum quadruplicatum).